A 320-amino-acid polypeptide reads, in one-letter code: Protease HtpX homolog (320 aa).

The next 2 membrane-spanning stretches (helical) occupy residues 6–26 (TAML…LIGG) and 28–48 (AGMM…YWNS). Zn(2+) is bound at residue H130. Residue E131 is part of the active site. H134 serves as a coordination point for Zn(2+). Helical transmembrane passes span 145-165 (ITAT…FFGG) and 173-193 (PLGF…AMLV). A Zn(2+)-binding site is contributed by E202. The tract at residues 281–320 (GGMNVSTPPVRAANPSRKSRSVPDTGLGRGGSQPPKGPWS) is disordered.

Belongs to the peptidase M48B family. It depends on Zn(2+) as a cofactor.

Its subcellular location is the cell inner membrane. This is Protease HtpX homolog from Rhizobium leguminosarum bv. trifolii (strain WSM2304).